A 20-amino-acid polypeptide reads, in one-letter code: Haemoporin (20 aa).

The tract at residues 1-20 (AAVPEAAAEATAEAAPVSEF) is disordered.

In terms of assembly, homopentamer. Forms a cylindrical structure with a central pore. As to expression, detected in the hemolymph.

The protein localises to the secreted. The sequence is that of Haemoporin from Aplysia californica (California sea hare).